A 377-amino-acid chain; its full sequence is Mechanosensory abnormality protein 6 (377 aa).

Residues 1-13 lie on the Cytoplasmic side of the membrane; that stretch reads MGLQSAAAHFINR. The helical transmembrane segment at 14–34 threads the bilayer; sequence FIIWITIFMVACFLLRLLVVL. Residues 35 to 377 lie on the Extracellular side of the membrane; that stretch reads DLNKRVYNHT…HCDLTHSYIT (343 aa). Cysteines 48 and 369 form a disulfide. A glycan (N-linked (GlcNAc...) asparagine) is linked at N94.

It belongs to the paraoxonase family. As to quaternary structure, component of a non-voltage-gated amiloride-sensitive cation channel complex (also called the degenerin channel complex) composed of at least the mec-2, mec-4, mec-6 and mec-10 subunits; the complex mediates mechanotransduction in touch cells. Interacts with mec-2, mec-4 and mec-10. Glycosylated. In terms of tissue distribution, expressed in neurons including the six touch receptors, ventral cord motor neurons, HSN, PVD, PVC, IL1, and several neurons near the nerve ring, in the anal ganglion and in the male tail sensory rays, in muscles including the body wall, vulval, intestinal, anal depressor and sphincter muscles, and in the excretory canal.

It localises to the cell membrane. The protein resides in the cell projection. The protein localises to the axon. Subunit of an amiloride-sensitive cation channel (degenerin channel complex) permeable for sodium, potassium, lithium and N-methylglucamine, and required for mechanosensory transduction (touch sensitivity). Interacts with degenerin channel proteins and stabilizes the channel. Plays a role in mechanosensory transduction (touch sensitivity). This chain is Mechanosensory abnormality protein 6, found in Caenorhabditis elegans.